The following is a 138-amino-acid chain: Protein NrdI (138 aa).

It belongs to the NrdI family.

Its function is as follows. Probably involved in ribonucleotide reductase function. The polypeptide is Protein NrdI (Paracoccus denitrificans (strain Pd 1222)).